We begin with the raw amino-acid sequence, 152 residues long: Transcriptional regulator MraZ (152 aa).

2 SpoVT-AbrB domains span residues 5–52 and 81–124; these read ASAI…PLKE and ATEC…SDAE.

The protein belongs to the MraZ family. As to quaternary structure, forms oligomers.

The protein resides in the cytoplasm. Its subcellular location is the nucleoid. The chain is Transcriptional regulator MraZ from Pasteurella multocida (strain Pm70).